Here is a 184-residue protein sequence, read N- to C-terminus: MIVGLVGEVLKKEPTYLHIEVGGVVYEVFISLNASAAIDKKQIRLHTTHIIREDSESLYGFVDINEKKMFDRLIKLNGVGPKVAIAICSTFKPQEFVQIVQQKNVAMLKKVPGIGPKSAQRILVELGEFDISESNVTSSAFQEASMALQSLGFKKEQIQKALQECTATDTASLVKEALKKIQKL.

Positions 1–62 are domain I; the sequence is MIVGLVGEVL…EDSESLYGFV (62 aa). The interval 63–134 is domain II; sequence DINEKKMFDR…ELGEFDISES (72 aa). The interval 134–135 is flexible linker; sequence SN. Residues 136–184 form a domain III region; the sequence is VTSSAFQEASMALQSLGFKKEQIQKALQECTATDTASLVKEALKKIQKL.

It belongs to the RuvA family. As to quaternary structure, homotetramer. Forms an RuvA(8)-RuvB(12)-Holliday junction (HJ) complex. HJ DNA is sandwiched between 2 RuvA tetramers; dsDNA enters through RuvA and exits via RuvB. An RuvB hexamer assembles on each DNA strand where it exits the tetramer. Each RuvB hexamer is contacted by two RuvA subunits (via domain III) on 2 adjacent RuvB subunits; this complex drives branch migration. In the full resolvosome a probable DNA-RuvA(4)-RuvB(12)-RuvC(2) complex forms which resolves the HJ.

It localises to the cytoplasm. The RuvA-RuvB-RuvC complex processes Holliday junction (HJ) DNA during genetic recombination and DNA repair, while the RuvA-RuvB complex plays an important role in the rescue of blocked DNA replication forks via replication fork reversal (RFR). RuvA specifically binds to HJ cruciform DNA, conferring on it an open structure. The RuvB hexamer acts as an ATP-dependent pump, pulling dsDNA into and through the RuvAB complex. HJ branch migration allows RuvC to scan DNA until it finds its consensus sequence, where it cleaves and resolves the cruciform DNA. The protein is Holliday junction branch migration complex subunit RuvA of Nitratiruptor sp. (strain SB155-2).